The following is a 98-amino-acid chain: NADH-ubiquinone oxidoreductase chain 4L (98 aa).

A run of 3 helical transmembrane segments spans residues 2–22 (PSISTNIILAFITALLGMLIF), 29–49 (SLLCLEGMMLSMFILSTLTIL), and 61–81 (ILLLVFAACEAAVGLALLVTV).

This sequence belongs to the complex I subunit 4L family. As to quaternary structure, core subunit of respiratory chain NADH dehydrogenase (Complex I) which is composed of 45 different subunits.

Its subcellular location is the mitochondrion inner membrane. The catalysed reaction is a ubiquinone + NADH + 5 H(+)(in) = a ubiquinol + NAD(+) + 4 H(+)(out). Functionally, core subunit of the mitochondrial membrane respiratory chain NADH dehydrogenase (Complex I) which catalyzes electron transfer from NADH through the respiratory chain, using ubiquinone as an electron acceptor. Part of the enzyme membrane arm which is embedded in the lipid bilayer and involved in proton translocation. The polypeptide is NADH-ubiquinone oxidoreductase chain 4L (MT-ND4L) (Eulemur coronatus (Crowned lemur)).